Consider the following 400-residue polypeptide: GTPase Obg (400 aa).

An Obg domain is found at 1–159; it reads MKFVDEVQIR…RTLKLELLLL (159 aa). Positions 160–333 constitute an OBG-type G domain; it reads ADVGMLGLPN…VCYDILDLLD (174 aa). Residues 166–173, 191–195, 213–216, 283–286, and 314–316 contribute to the GTP site; these read GLPNAGKS, FTTLV, DIPG, NKMD, and SAI. Mg(2+) is bound by residues S173 and T193.

This sequence belongs to the TRAFAC class OBG-HflX-like GTPase superfamily. OBG GTPase family. Monomer. The cofactor is Mg(2+).

Its subcellular location is the cytoplasm. Functionally, an essential GTPase which binds GTP, GDP and possibly (p)ppGpp with moderate affinity, with high nucleotide exchange rates and a fairly low GTP hydrolysis rate. Plays a role in control of the cell cycle, stress response, ribosome biogenesis and in those bacteria that undergo differentiation, in morphogenesis control. This is GTPase Obg from Aeromonas salmonicida (strain A449).